A 195-amino-acid chain; its full sequence is Molybdenum cofactor guanylyltransferase (195 aa).

Residues 12–14, Lys-25, Asn-53, Asp-70, and Asp-100 each bind GTP; that span reads LAG. Asp-100 serves as a coordination point for Mg(2+).

This sequence belongs to the MobA family. As to quaternary structure, monomer. Mg(2+) is required as a cofactor.

The protein resides in the cytoplasm. The catalysed reaction is Mo-molybdopterin + GTP + H(+) = Mo-molybdopterin guanine dinucleotide + diphosphate. Functionally, transfers a GMP moiety from GTP to Mo-molybdopterin (Mo-MPT) cofactor (Moco or molybdenum cofactor) to form Mo-molybdopterin guanine dinucleotide (Mo-MGD) cofactor. In Vibrio campbellii (strain ATCC BAA-1116), this protein is Molybdenum cofactor guanylyltransferase.